The following is a 1236-amino-acid chain: Calcium-activated potassium channel subunit alpha-1 (1236 aa).

Residues 1-21 (MANGGGGGGGSSGGGGGGGGS) show a composition bias toward gly residues. Residues 1–61 (MANGGGGGGG…SSSSSSSSSV (61 aa)) are disordered. Residues 1 to 86 (MANGGGGGGG…VPCDSRGQRM (86 aa)) are Extracellular-facing. Over residues 39–60 (SSSSSSSSSSSSSSSSSSSSSS) the composition is skewed to low complexity. The chain crosses the membrane as a helical span at residues 87–107 (WWAFLASSMVTFFGGLFIILL). Over 108 to 178 (WRTLKYLWTV…MISAQTLTGR (71 aa)) the chain is Cytoplasmic. S-palmitoyl cysteine attachment occurs at residues cysteine 118, cysteine 119, and cysteine 121. A helical transmembrane segment spans residues 179–199 (VLVVLVFALSIGALVIYFIDS). At 200-214 (SNPIESCQNFYKDFT) the chain is on the extracellular side. A helical transmembrane segment spans residues 215–235 (LQIDMAFNVFFLLYFGLRFIA). At 236-239 (ANDK) the chain is on the cytoplasmic side. Residues 240-260 (LWFWLEVNSVVDFFTVPPVFV) form a helical membrane-spanning segment. Residues 261 to 264 (SVYL) are Extracellular-facing. Residues 265-285 (NRSWLGLRFLRALRLIQFSEI) traverse the membrane as a helical segment. Over 286-300 (LQFLNILKTSNSIKL) the chain is Cytoplasmic. A helical transmembrane segment spans residues 301-321 (VNLLSIFISTWLTAAGFIHLV). Over 322-335 (ENSGDPWENFQNNQ) the chain is Extracellular. Positions 336–358 (ALTYWECVYLLMVTMSTVGYGDV) form an intramembrane region, pore-forming. The short motif at 352 to 355 (TVGY) is the Selectivity for potassium element. The Extracellular segment spans residues 359-367 (YAKTTLGRL). A helical membrane pass occupies residues 368-388 (FMVFFILGGLAMFASYVPEII). The Cytoplasmic portion of the chain corresponds to 389-1236 (ELIGNRKKYG…KQKYVQEERL (848 aa)). The region spanning 407–549 (RKHIVVCGHI…WNWKEGDDAI (143 aa)) is the RCK N-terminal 1 domain. Mg(2+) is bound by residues glutamate 439, glutamine 462, and glutamate 464. A segment S7 region spans residues 556 to 576 (LGFIAQSCLAQGLSTMLANLF). The tract at residues 613 to 633 (LSFPTVCELCFVKLKLLMIAI) is segment S8. The interval 677 to 681 (CKACH) is heme-binding motif. A disordered region spans residues 757-787 (EDEQPSTLSPKKKQRNGGMRNSPNTSPKLMR). Threonine 763 carries the phosphothreonine modification. Phosphoserine occurs at positions 765, 778, and 782. The segment at 837–857 (VLSGHVVVCIFGDVSSALIGL) is segment S9. The RCK N-terminal 2 domain maps to 839–983 (SGHVVVCIFG…MDRSSPDNSP (145 aa)). Threonine 970 is subject to Phosphothreonine. Serine 978 and serine 982 each carry phosphoserine. Positions 1003-1025 (TELVNDTNVQFLDQDDDDDPDTE) match the Calcium bowl motif. Glutamine 1012, aspartate 1015, aspartate 1018, and aspartate 1020 together coordinate Ca(2+). The interval 1032–1052 (FACGTAFAVSVLDSLMSATYF) is segment S10. Positions 1186–1211 (RASLSHSSHSSQSSSKKSSSVHSIPS) are enriched in low complexity. The disordered stretch occupies residues 1186 to 1236 (RASLSHSSHSSQSSSKKSSSVHSIPSTANRQNRPKSRESRDKQKYVQEERL). The segment covering 1220-1236 (KSRESRDKQKYVQEERL) has biased composition (basic and acidic residues). Phosphoserine occurs at positions 1221 and 1224.

Belongs to the potassium channel family. Calcium-activated (TC 1.A.1.3) subfamily. KCa1.1/KCNMA1 sub-subfamily. In terms of assembly, homotetramer; which constitutes the calcium-activated potassium channel. Interacts with RAB11B. Interacts with beta subunits KCNMB1, KCNMB2, KCNMB3 and KCNMB4. Interacts with gamma subunits LRRC26, LRRC38, LRRC52 and LRRC55. Beta and gamma subunits are accessory, and modulate its activity. Post-translationally, phosphorylated. Phosphorylation by kinases such as PKA and/or PKG. In smooth muscles, phosphorylation affects its activity. In terms of processing, palmitoylation by ZDHHC22 and ZDHHC23 within the intracellular linker between the S0 and S1 transmembrane domains regulates localization to the plasma membrane. Depalmitoylated by LYPLA1 and LYPLAL1, leading to retard exit from the trans-Golgi network. As to expression, widely expressed. Except in myocytes, it is almost ubiquitously expressed.

The protein resides in the cell membrane. The catalysed reaction is K(+)(in) = K(+)(out). Ethanol and carbon monoxide-bound heme increase channel activation. Heme inhibits channel activation. Its function is as follows. Potassium channel activated by both membrane depolarization or increase in cytosolic Ca(2+) that mediates export of K(+). It is also activated by the concentration of cytosolic Mg(2+). Its activation dampens the excitatory events that elevate the cytosolic Ca(2+) concentration and/or depolarize the cell membrane. It therefore contributes to repolarization of the membrane potential. Plays a key role in controlling excitability in a number of systems, such as regulation of the contraction of smooth muscle, the tuning of hair cells in the cochlea, regulation of transmitter release, and innate immunity. In smooth muscles, its activation by high level of Ca(2+), caused by ryanodine receptors in the sarcoplasmic reticulum, regulates the membrane potential. In cochlea cells, its number and kinetic properties partly determine the characteristic frequency of each hair cell and thereby helps to establish a tonotopic map. Kinetics of KCNMA1 channels are determined by alternative splicing, phosphorylation status and its combination with modulating beta subunits. Highly sensitive to both iberiotoxin (IbTx) and charybdotoxin (CTX). Possibly induces sleep when activated by melatonin and through melatonin receptor MTNR1A-dependent dissociation of G-beta and G-gamma subunits, leading to increased sensitivity to Ca(2+) and reduced synaptic transmission. In terms of biological role, potassium channel activated by both membrane depolarization or increase in cytosolic Ca(2+) that mediates export of K(+). The sequence is that of Calcium-activated potassium channel subunit alpha-1 from Homo sapiens (Human).